The following is a 204-amino-acid chain: Large ribosomal subunit protein uL4 (204 aa).

The interval 44–76 is disordered; it reads RAGTHRTKGMGEISGTTKKPYRQKGTGSARQGS.

This sequence belongs to the universal ribosomal protein uL4 family. As to quaternary structure, part of the 50S ribosomal subunit.

In terms of biological role, one of the primary rRNA binding proteins, this protein initially binds near the 5'-end of the 23S rRNA. It is important during the early stages of 50S assembly. It makes multiple contacts with different domains of the 23S rRNA in the assembled 50S subunit and ribosome. Forms part of the polypeptide exit tunnel. The chain is Large ribosomal subunit protein uL4 from Gluconobacter oxydans (strain 621H) (Gluconobacter suboxydans).